A 397-amino-acid chain; its full sequence is Arginine biosynthesis bifunctional protein ArgJ (397 aa).

Residues T147, K173, T184, E270, N392, and T397 each contribute to the substrate site. T184 serves as the catalytic Nucleophile.

The protein belongs to the ArgJ family. In terms of assembly, heterotetramer of two alpha and two beta chains.

It is found in the cytoplasm. The catalysed reaction is N(2)-acetyl-L-ornithine + L-glutamate = N-acetyl-L-glutamate + L-ornithine. It catalyses the reaction L-glutamate + acetyl-CoA = N-acetyl-L-glutamate + CoA + H(+). Its pathway is amino-acid biosynthesis; L-arginine biosynthesis; L-ornithine and N-acetyl-L-glutamate from L-glutamate and N(2)-acetyl-L-ornithine (cyclic): step 1/1. The protein operates within amino-acid biosynthesis; L-arginine biosynthesis; N(2)-acetyl-L-ornithine from L-glutamate: step 1/4. Its function is as follows. Catalyzes two activities which are involved in the cyclic version of arginine biosynthesis: the synthesis of N-acetylglutamate from glutamate and acetyl-CoA as the acetyl donor, and of ornithine by transacetylation between N(2)-acetylornithine and glutamate. The polypeptide is Arginine biosynthesis bifunctional protein ArgJ (Streptococcus thermophilus (strain ATCC BAA-250 / LMG 18311)).